The sequence spans 595 residues: ATP-dependent lipid A-core flippase (595 aa).

Residues 1–20 (MSQAYQPDSTKTSAKKSSAV) form a disordered region. The span at 9–19 (STKTSAKKSSA) shows a compositional bias: low complexity. A run of 4 helical transmembrane segments spans residues 41-61 (WWAILLTITGFAINAGTEIWI), 81-101 (GLFPFIIVMLFFVRGVGSFLG), 169-189 (VIALMGFLLYSNWRLTLILFV), and 266-286 (INTPAVQLLMAVAMAVVVWLA). The region spanning 45-326 (LLTITGFAIN…LTDVNQQLQR (282 aa)) is the ABC transmembrane type-1 domain. Residues 357-592 (IKLDNISLVY…HGHYAQMYAR (236 aa)) enclose the ABC transporter domain. 390–397 (GRSGAGKS) serves as a coordination point for ATP.

Belongs to the ABC transporter superfamily. Lipid exporter (TC 3.A.1.106) family. As to quaternary structure, homodimer.

It localises to the cell inner membrane. The enzyme catalyses ATP + H2O + lipid A-core oligosaccharideSide 1 = ADP + phosphate + lipid A-core oligosaccharideSide 2.. Involved in lipopolysaccharide (LPS) biosynthesis. Translocates lipid A-core from the inner to the outer leaflet of the inner membrane. Transmembrane domains (TMD) form a pore in the inner membrane and the ATP-binding domain (NBD) is responsible for energy generation. The protein is ATP-dependent lipid A-core flippase of Psychrobacter arcticus (strain DSM 17307 / VKM B-2377 / 273-4).